The primary structure comprises 211 residues: NADH-quinone oxidoreductase subunit I (211 aa).

The interval 1–27 is disordered; that stretch reads MANTDRPALPHKRAVPPSRADSGPRRR. 2 consecutive 4Fe-4S ferredoxin-type domains span residues 71–101 and 117–146; these read LNRYPDGLEKCIGCELCAWACPADAIYVEGA and RVYQINYLRCIGCGLCIEACPTRALTMTYD. [4Fe-4S] cluster contacts are provided by Cys-81, Cys-84, Cys-87, Cys-91, Cys-126, Cys-129, Cys-132, and Cys-136.

This sequence belongs to the complex I 23 kDa subunit family. In terms of assembly, NDH-1 is composed of 14 different subunits. Subunits NuoA, H, J, K, L, M, N constitute the membrane sector of the complex. [4Fe-4S] cluster is required as a cofactor.

The protein localises to the cell membrane. It catalyses the reaction a quinone + NADH + 5 H(+)(in) = a quinol + NAD(+) + 4 H(+)(out). Its function is as follows. NDH-1 shuttles electrons from NADH, via FMN and iron-sulfur (Fe-S) centers, to quinones in the respiratory chain. The immediate electron acceptor for the enzyme in this species is believed to be menaquinone. Couples the redox reaction to proton translocation (for every two electrons transferred, four hydrogen ions are translocated across the cytoplasmic membrane), and thus conserves the redox energy in a proton gradient. This chain is NADH-quinone oxidoreductase subunit I, found in Mycobacterium bovis (strain ATCC BAA-935 / AF2122/97).